Consider the following 193-residue polypeptide: Cell wall galactomannoprotein (193 aa).

The first 17 residues, 1 to 17 (MFFRILALLPLVFLVTA), serve as a signal peptide directing secretion. N-linked (GlcNAc...) asparagine glycosylation is found at asparagine 38 and asparagine 173.

The protein belongs to the cell wall mannoprotein 1 family. In terms of processing, galactomannoprotein, glycosylated.

It localises to the secreted. Its subcellular location is the cell wall. Functionally, constitutive protein of the cell wall. The sequence is that of Cell wall galactomannoprotein from Armillaria ostoyae (Armillaria root rot fungus).